A 423-amino-acid chain; its full sequence is Probable multifunctional protein ADE2 (423 aa).

The interval 1–263 (MSSLAEIASR…KVMDITATFS (263 aa)) is SAICAR synthetase. The interval 264–423 (KHQQKCHVLV…NIYNANRKLE (160 aa)) is AIR carboxylase.

The protein in the N-terminal section; belongs to the SAICAR synthetase family. This sequence in the C-terminal section; belongs to the AIR carboxylase family. Class II subfamily.

The enzyme catalyses 5-amino-1-(5-phospho-D-ribosyl)imidazole-4-carboxylate + L-aspartate + ATP = (2S)-2-[5-amino-1-(5-phospho-beta-D-ribosyl)imidazole-4-carboxamido]succinate + ADP + phosphate + 2 H(+). The catalysed reaction is 5-amino-1-(5-phospho-D-ribosyl)imidazole-4-carboxylate + H(+) = 5-amino-1-(5-phospho-beta-D-ribosyl)imidazole + CO2. It participates in purine metabolism; IMP biosynthesis via de novo pathway; 5-amino-1-(5-phospho-D-ribosyl)imidazole-4-carboxamide from 5-amino-1-(5-phospho-D-ribosyl)imidazole-4-carboxylate: step 1/2. Its pathway is purine metabolism; IMP biosynthesis via de novo pathway; 5-amino-1-(5-phospho-D-ribosyl)imidazole-4-carboxylate from 5-amino-1-(5-phospho-D-ribosyl)imidazole (carboxylase route): step 1/1. The polypeptide is Probable multifunctional protein ADE2 (Caenorhabditis elegans).